The chain runs to 304 residues: Putative S-adenosyl-L-methionine-dependent methyltransferase MMAR_1057 (304 aa).

Residues Asp130 and Asp159 to Leu160 each bind S-adenosyl-L-methionine.

It belongs to the UPF0677 family.

In terms of biological role, exhibits S-adenosyl-L-methionine-dependent methyltransferase activity. The protein is Putative S-adenosyl-L-methionine-dependent methyltransferase MMAR_1057 of Mycobacterium marinum (strain ATCC BAA-535 / M).